Here is a 120-residue protein sequence, read N- to C-terminus: Large ribosomal subunit protein uL18 (120 aa).

Positions 1 to 24 (MITKAAKNATRKKRHARVRAKLTG) are disordered. The segment covering 9 to 20 (ATRKKRHARVRA) has biased composition (basic residues).

Belongs to the universal ribosomal protein uL18 family. As to quaternary structure, part of the 50S ribosomal subunit; part of the 5S rRNA/L5/L18/L25 subcomplex. Contacts the 5S and 23S rRNAs.

This is one of the proteins that bind and probably mediate the attachment of the 5S RNA into the large ribosomal subunit, where it forms part of the central protuberance. The sequence is that of Large ribosomal subunit protein uL18 from Bacillus mycoides (strain KBAB4) (Bacillus weihenstephanensis).